The chain runs to 448 residues: Deoxyguanosinetriphosphate triphosphohydrolase-like protein (448 aa).

The segment at 1–26 (MQINSSWQERFLADPPREKDHRPPFR) is disordered. Over residues 11–26 (FLADPPREKDHRPPFR) the composition is skewed to basic and acidic residues. The HD domain maps to 59-272 (RLTHSLEVAQ…MELADDIAYA (214 aa)).

The protein belongs to the dGTPase family. Type 2 subfamily.

The sequence is that of Deoxyguanosinetriphosphate triphosphohydrolase-like protein from Histophilus somni (strain 129Pt) (Haemophilus somnus).